The primary structure comprises 53 residues: UPF0391 membrane protein Bmul_5473/BMULJ_06024 (53 aa).

Helical transmembrane passes span 5 to 25 and 30 to 50; these read ALIF…GIAA and IAKI…LLGV.

This sequence belongs to the UPF0391 family.

It is found in the cell membrane. In Burkholderia multivorans (strain ATCC 17616 / 249), this protein is UPF0391 membrane protein Bmul_5473/BMULJ_06024.